The chain runs to 179 residues: Stathmin-2 (179 aa).

The segment at 1 to 26 (MAKTAMAYKEKMKELSMLSLICSCFY) is membrane attachment. Position 16 is a phosphoserine (S16). S-palmitoyl cysteine attachment occurs at residues C22 and C24. The 142-residue stretch at 38–179 (DDMEVKQINK…NKELQVELSG (142 aa)) folds into the SLD domain. The interval 39–96 (DMEVKQINKRASGQAFELILKPPSPISEAPRTLASPKKKDLSLEEIQKKLEAAEERRK) is regulatory/phosphorylation domain. A phosphoserine mark is found at S50, S62, S73, and S97. The stretch at 75-179 (KKKDLSLEEI…NKELQVELSG (105 aa)) forms a coiled coil.

This sequence belongs to the stathmin family. In terms of assembly, interacts with MAPK8. Interacts with ITM2C. Interacts with KIFBP. Interacts (via the N-terminal region) with CIB1 (via C-terminal region); the interaction is direct, occurs in a calcium-dependent manner and attenuates the neurite outgrowth inhibition of STMN2. Sumoylated. Post-translationally, phosphorylated mostly by MAPK8, but also by MAPK9 and MAPK10 in the developing brain cortex. In terms of processing, N-terminal palmitoylation promotes specific anchoring to the cytosolic leaflet of Golgi membranes and subsequent vesicular trafficking along dendrites and axons. Neuronal Stathmins are substrates for palmitoyltransferases ZDHHC3, ZDHHC7 and ZDHHC15. Neuron specific.

It localises to the cytoplasm. It is found in the perinuclear region. The protein localises to the cell projection. The protein resides in the growth cone. Its subcellular location is the membrane. It localises to the axon. It is found in the golgi apparatus. The protein localises to the endosome. The protein resides in the lamellipodium. Regulator of microtubule stability. When phosphorylated by MAPK8, stabilizes microtubules and consequently controls neurite length in cortical neurons. In the developing brain, negatively regulates the rate of exit from multipolar stage and retards radial migration from the ventricular zone. The sequence is that of Stathmin-2 (STMN2) from Homo sapiens (Human).